A 495-amino-acid polypeptide reads, in one-letter code: Glucose-6-phosphate 1-dehydrogenase (495 aa).

An Isoglutamyl lysine isopeptide (Lys-Gln) (interchain with Q-Cter in protein Pup) cross-link involves residue lysine 51. Residues 94-95 (DL) and lysine 154 contribute to the NADP(+) site. Residues histidine 184, lysine 188, glutamate 222, and aspartate 241 each contribute to the substrate site. The active-site Proton acceptor is histidine 246. Lysine 345 serves as a coordination point for substrate.

Belongs to the glucose-6-phosphate dehydrogenase family.

The catalysed reaction is D-glucose 6-phosphate + NADP(+) = 6-phospho-D-glucono-1,5-lactone + NADPH + H(+). The protein operates within carbohydrate degradation; pentose phosphate pathway; D-ribulose 5-phosphate from D-glucose 6-phosphate (oxidative stage): step 1/3. Its function is as follows. Catalyzes the oxidation of glucose 6-phosphate to 6-phosphogluconolactone. This chain is Glucose-6-phosphate 1-dehydrogenase, found in Mycolicibacterium smegmatis (strain ATCC 700084 / mc(2)155) (Mycobacterium smegmatis).